Consider the following 840-residue polypeptide: Subtilisin-like protease SBT2.3 (840 aa).

The N-terminal stretch at 1–27 (MVRVMLVRFGFLLLMISFVFLSNNTLG) is a signal peptide. The propeptide at 28–146 (QQQDDDDDSA…IVLDYSVRTA (119 aa)) is activation peptide. Positions 38-146 (VYIVTLKQPP…IVLDYSVRTA (109 aa)) constitute an Inhibitor I9 domain. A compositionally biased stretch (basic residues) spans 61–81 (KSKFTPKLRPRNNSRKRHGKS). The tract at residues 61 to 85 (KSKFTPKLRPRNNSRKRHGKSKIPS) is disordered. Asn72 carries an N-linked (GlcNAc...) asparagine glycan. Positions 148–694 (TYTPQFMGLP…SGFVNATAAL (547 aa)) constitute a Peptidase S8 domain. The active-site Charge relay system is the Asp180. N-linked (GlcNAc...) asparagine glycans are attached at residues Asn193 and Asn241. The active-site Charge relay system is the His255. N-linked (GlcNAc...) asparagine glycosylation is found at Asn398, Asn427, Asn480, Asn525, and Asn553. In terms of domain architecture, PA spans 418-513 (MISAFHALNN…MDMPGIIIPS (96 aa)). The active-site Charge relay system is Ser619. N-linked (GlcNAc...) asparagine glycans are attached at residues Asn689, Asn715, Asn723, Asn767, and Asn808.

It belongs to the peptidase S8 family.

Its subcellular location is the secreted. The chain is Subtilisin-like protease SBT2.3 from Arabidopsis thaliana (Mouse-ear cress).